Here is a 70-residue protein sequence, read N- to C-terminus: UPF0352 protein Sden_2336 (70 aa).

It belongs to the UPF0352 family.

The protein is UPF0352 protein Sden_2336 of Shewanella denitrificans (strain OS217 / ATCC BAA-1090 / DSM 15013).